A 103-amino-acid polypeptide reads, in one-letter code: Small ribosomal subunit protein uS14c (103 aa).

Residues 34 to 56 (KVSPLSLSEKTKMREKLQSLPRN) are disordered.

This sequence belongs to the universal ribosomal protein uS14 family. In terms of assembly, part of the 30S ribosomal subunit.

It localises to the plastid. Its subcellular location is the chloroplast. Binds 16S rRNA, required for the assembly of 30S particles. In Triticum aestivum (Wheat), this protein is Small ribosomal subunit protein uS14c.